A 29-amino-acid polypeptide reads, in one-letter code: Bacteriocin (29 aa).

It localises to the secreted. Functionally, has antibacterial activity against strains of L.monocytogenes, L.lactis, B.subtilis, S.typhi, S.aureus, C.perfringens, E.aerogenes and M.luteus but not against E.coli, S.sonnei, S.pneumoniae, S.faecalis, P.aeruginosa, K.pneumoniae or P.vulgaris. This is Bacteriocin from Lactococcus lactis subsp. lactis (Streptococcus lactis).